Here is a 625-residue protein sequence, read N- to C-terminus: Voltage-gated potassium channel KCNC4 (625 aa).

Disordered stretches follow at residues 1 to 24 and 65 to 86; these read MISS…SKTC and LADP…SSGS. The segment at 1 to 28 is inactivation gate; the sequence is MISSVCVSSYRGRKSGNKPPSKTCLKEE. Residues 1–227 lie on the Cytoplasmic side of the membrane; it reads MISSVCVSSY…EDPYSSRAAR (227 aa). Residues serine 8, serine 9, serine 15, and serine 21 each carry the phosphoserine modification. A compositionally biased stretch (gly residues) spans 77–86; sequence DGGGAGSSGS. Zn(2+) is bound by residues histidine 117, cysteine 123, cysteine 144, and cysteine 145. A helical transmembrane segment spans residues 228-248; sequence VVAFASLFFILVSITTFCLET. N-linked (GlcNAc...) asparagine glycans are attached at residues asparagine 257 and asparagine 266. A helical membrane pass occupies residues 279-299; that stretch reads EPILTYIEGVCVMWFTLEFLV. At 300–313 the chain is on the cytoplasmic side; it reads RIVCCPDTLDFVKN. Residues 314–334 traverse the membrane as a helical segment; that stretch reads LLNIIDFVAILPFYLEVGLSG. The helical; Voltage-sensor transmembrane segment at 346-365 threads the bilayer; sequence FLRVVRFVRILRIFKLTRHF. At 366–381 the chain is on the cytoplasmic side; that stretch reads VGLRVLGHTLRASTNE. Residues 382–402 form a helical membrane-spanning segment; that stretch reads FLLLIIFLALGVLIFATMIYY. Residues threonine 437, leucine 438, glycine 439, and tyrosine 440 each contribute to the K(+) site. The Selectivity filter signature appears at 437 to 442; that stretch reads TLGYGD. The chain crosses the membrane as a helical span at residues 453–473; sequence VGALCALAGVLTIAMPVPVIV. The Cytoplasmic segment spans residues 474-625; it reads NNFGMYYSLA…CVPVSHTCAL (152 aa). Residues 490 to 581 are disordered; the sequence is PKKRKKHVPR…RRALRRSGTR (92 aa). A compositionally biased stretch (basic and acidic residues) spans 528–543; that stretch reads AREEGMVERKRADSKQ.

It belongs to the potassium channel family. C (Shaw) (TC 1.A.1.2) subfamily. Kv3.4/KCNC4 sub-subfamily. As to quaternary structure, homotetramer. Heterotetramer of potassium channel proteins. Post-translationally, phosphorylation of serine residues in the inactivation gate inhibits rapid channel closure.

Its subcellular location is the membrane. It catalyses the reaction K(+)(in) = K(+)(out). In terms of biological role, voltage-gated potassium channel that opens in response to the voltage difference across the membrane, forming a potassium-selective channel through which potassium ions pass in accordance with their electrochemical gradient. The channel displays rapid activation and inactivation kinetics. In Rattus norvegicus (Rat), this protein is Voltage-gated potassium channel KCNC4.